The following is a 496-amino-acid chain: Cytochrome P450 71D178 (496 aa).

The helical; Signal-anchor for type II membrane protein transmembrane segment at 1 to 21 (MDISISWVVIILLVLSYLILM) threads the bilayer. A heme-binding site is contributed by Cys435.

This sequence belongs to the cytochrome P450 family. It depends on heme as a cofactor. As to expression, expressed in flowers, leaves and stems, especially in glandular trichomes.

The protein localises to the membrane. It carries out the reaction (4S)-limonene + reduced [NADPH--hemoprotein reductase] + O2 = (1S,5R)-carveol + oxidized [NADPH--hemoprotein reductase] + H2O + H(+). The catalysed reaction is gamma-terpinene + 2 reduced [NADPH--hemoprotein reductase] + 2 O2 = carvacrol + 2 oxidized [NADPH--hemoprotein reductase] + 3 H2O + 2 H(+). The enzyme catalyses gamma-terpinene + 2 reduced [NADPH--hemoprotein reductase] + 2 O2 = thymol + 2 oxidized [NADPH--hemoprotein reductase] + 3 H2O + 2 H(+). It catalyses the reaction (4R)-limonene + reduced [NADPH--hemoprotein reductase] + O2 = (1R,6S)-isopiperitenol + oxidized [NADPH--hemoprotein reductase] + H2O + H(+). Its pathway is secondary metabolite biosynthesis; terpenoid biosynthesis. Functionally, involved in the biosynthesis of phenolic monoterpenes natural products thymol and carvacrol which have a broad range of biological activities acting as antimicrobial compounds, insecticides, antioxidants and pharmaceutical agents. Catalyzes the C2- and C3-hydroxylation of gamma-terpinene to produce carvacrol and thymol, respectively. Also mediates the C6-hydroxylation of (4S)-limonene to form carveol and the C3-hydroxylation of (4R)-limonene to generate (+)-trans-isopiperitenol. This is Cytochrome P450 71D178 from Origanum vulgare (Wild marjoram).